Reading from the N-terminus, the 320-residue chain is MESGETLLKKLDGKLSGLRGRLTPDTGMDKITWFRAGGPAQVLFQPADEEDLSSFLKAVPEEVPILVVGIGSNLLVRDGGVPGFVVRLSAKGFGEVDQVSETQLRAGAATPDKRVAAAALEAGLAGFHFYHGIPGGMGGALRMNAGANGVETRERVVEVRALDRKGEVHVLSNADMGYAYRHSSASSDLIFTSVLFEGTPGEHEAIKQAMDEVQHHRETVQPVREKTGGSTFKNPEGTSAWKEIDKAGCRGLRVGGAQMSEMHCNFMINTGTATGLDLETLGETVRARVFENSGIRLHWEIKRLGLFREGEAVEEFLGKF.

In terms of domain architecture, FAD-binding PCMH-type spans 35 to 216; it reads RAGGPAQVLF…KQAMDEVQHH (182 aa). Arg181 is an active-site residue. Ser230 (proton donor) is an active-site residue. Glu300 is an active-site residue.

It belongs to the MurB family. It depends on FAD as a cofactor.

It is found in the cytoplasm. It carries out the reaction UDP-N-acetyl-alpha-D-muramate + NADP(+) = UDP-N-acetyl-3-O-(1-carboxyvinyl)-alpha-D-glucosamine + NADPH + H(+). It functions in the pathway cell wall biogenesis; peptidoglycan biosynthesis. Its function is as follows. Cell wall formation. In Brucella anthropi (strain ATCC 49188 / DSM 6882 / CCUG 24695 / JCM 21032 / LMG 3331 / NBRC 15819 / NCTC 12168 / Alc 37) (Ochrobactrum anthropi), this protein is UDP-N-acetylenolpyruvoylglucosamine reductase.